A 289-amino-acid chain; its full sequence is Diaminopimelate epimerase (289 aa).

The substrate site is built by Asn-13, Gln-52, and Asn-72. Cys-81 acts as the Proton donor in catalysis. Residues 82–83 (GN), Asn-167, Asn-201, and 219–220 (ER) contribute to the substrate site. Cys-228 functions as the Proton acceptor in the catalytic mechanism. 229–230 (GT) contacts substrate.

The protein belongs to the diaminopimelate epimerase family. As to quaternary structure, homodimer.

It localises to the cytoplasm. The enzyme catalyses (2S,6S)-2,6-diaminopimelate = meso-2,6-diaminopimelate. Its pathway is amino-acid biosynthesis; L-lysine biosynthesis via DAP pathway; DL-2,6-diaminopimelate from LL-2,6-diaminopimelate: step 1/1. In terms of biological role, catalyzes the stereoinversion of LL-2,6-diaminopimelate (L,L-DAP) to meso-diaminopimelate (meso-DAP), a precursor of L-lysine and an essential component of the bacterial peptidoglycan. The polypeptide is Diaminopimelate epimerase (Caulobacter sp. (strain K31)).